Consider the following 517-residue polypeptide: Maturase K (517 aa).

It belongs to the intron maturase 2 family. MatK subfamily.

The protein localises to the plastid. It localises to the chloroplast. Functionally, usually encoded in the trnK tRNA gene intron. Probably assists in splicing its own and other chloroplast group II introns. The chain is Maturase K from Veronica arvensis (Wall speedwell).